The following is a 417-amino-acid chain: Protein translocase subunit SecD (417 aa).

6 helical membrane passes run 9–29 (LLVSVLAIVIAFAVFIKPLVS), 236–256 (ASMKAFAIGLAGVFLFMLLYY), 258–278 (LSGLVADIVLLLYTLLLLAVM), 288–308 (PGMAGIILSIGMAVDANVLIF), 333–353 (FTTILDSNVTTLMAAAVLFYL), and 360–380 (GFAVTLALGVLISMFTAVTVT).

The protein belongs to the SecD/SecF family. SecD subfamily. Forms a complex with SecF. Part of the essential Sec protein translocation apparatus which comprises SecA, SecYEG and auxiliary proteins SecDF. Other proteins may also be involved.

Its subcellular location is the cell membrane. Part of the Sec protein translocase complex. Interacts with the SecYEG preprotein conducting channel. SecDF uses the proton motive force (PMF) to complete protein translocation after the ATP-dependent function of SecA. In Acidaminococcus fermentans (strain ATCC 25085 / DSM 20731 / CCUG 9996 / CIP 106432 / VR4), this protein is Protein translocase subunit SecD.